The chain runs to 1104 residues: General transcription factor II-I repeat domain-containing protein 1 (1104 aa).

Glycyl lysine isopeptide (Lys-Gly) (interchain with G-Cter in SUMO2) cross-links involve residues lysine 27, lysine 184, lysine 212, lysine 225, lysine 238, lysine 271, lysine 337, lysine 436, lysine 439, and lysine 443. Residues 119–213 (LEQCSDVYLL…PDDGGQDTKA (95 aa)) form a GTF2I-like 1 repeat. The stretch at 342–436 (IKEMEDINTL…FDERIFTGNK (95 aa)) is one GTF2I-like 2 repeat. A Phosphoserine modification is found at serine 448. The disordered stretch occupies residues 509-559 (SDPSPTSEEMTDSLPGHLPSEDSGYGMEMPADKGPSEEPWSEERPAEESPG). Residues 538–555 (PADKGPSEEPWSEERPAE) show a composition bias toward basic and acidic residues. The stretch at 556-650 (ESPGDVIRPL…ELLTDGVKEP (95 aa)) is one GTF2I-like 3 repeat. Glycyl lysine isopeptide (Lys-Gly) (interchain with G-Cter in SUMO2) cross-links involve residues lysine 567, lysine 579, lysine 588, lysine 622, lysine 638, lysine 669, lysine 709, lysine 717, lysine 757, lysine 759, and lysine 772. The GTF2I-like 4 repeat unit spans residues 681 to 775 (LSRIDIANTL…FQGLIPKPET (95 aa)). The interval 783–802 (EAGKTTRPRRLQQDTWQPDE) is disordered. A GTF2I-like 5 repeat occupies 805–899 (ANRLGEKVIL…LQPFAEVCND (95 aa)). Glycyl lysine isopeptide (Lys-Gly) (interchain with G-Cter in SUMO2) cross-links involve residues lysine 841 and lysine 901. The stretch at 908-1002 (SNKLGKKVIL…LQPFGDVCNN (95 aa)) is one GTF2I-like 6 repeat. 2 disordered regions span residues 1001 to 1044 (NNAK…VAST) and 1058 to 1104 (LHPN…LPTR). A Nuclear localization signal motif is present at residues 1012-1019 (PKRKRKRV). A compositionally biased stretch (low complexity) spans 1021–1043 (EGNSVSSSSSSSSSSSNPESVAS).

Belongs to the TFII-I family. In terms of assembly, interacts with the retinoblastoma protein (RB1) via its C-terminus. As to expression, widely expressed.

It is found in the nucleus. Its function is as follows. May be a transcription regulator involved in cell-cycle progression and skeletal muscle differentiation. May repress GTF2I transcriptional functions, by preventing its nuclear residency, or by inhibiting its transcriptional activation. May contribute to slow-twitch fiber type specificity during myogenesis and in regenerating muscles. Binds troponin I slow-muscle fiber enhancer (USE B1). Binds specifically and with high affinity to the EFG sequences derived from the early enhancer of HOXC8. This chain is General transcription factor II-I repeat domain-containing protein 1 (Gtf2ird1), found in Mus musculus (Mouse).